The chain runs to 681 residues: Protein hook (681 aa).

Residues 6-123 enclose the Calponin-homology (CH) domain; that stretch reads NEMYYSLLEW…RLLQLVLGCA (118 aa). Coiled coils occupy residues 135-439 and 482-584; these read EIMS…LKCG and QTAL…KYRK.

Belongs to the hook family. As to quaternary structure, homodimer. Interacts with microtubules via its N-terminus.

Its subcellular location is the cytoplasm. The protein localises to the cytoskeleton. It is found in the endosome. The protein resides in the synapse. In terms of biological role, involved in endocytic trafficking by stabilizing organelles of the endocytic pathway. Probably acts as a cytoskeletal linker protein required to tether endosome vesicles to the cytoskeleton. Involved in modulation of endocytosis at stages required for down-regulation of membrane proteins that control synapse size. Not involved in synaptic vesicle recycling. Required in R7 cells for boss endocytosis into multivesicular bodies (MVBs). Has a role in regulating adult longevity. The protein is Protein hook of Drosophila ananassae (Fruit fly).